The primary structure comprises 437 residues: Endoplasmic reticulum protein SC65 (437 aa).

The signal sequence occupies residues 1–18; that stretch reads MARVAWGLLWLLLGSAGA. The N-linked (GlcNAc...) asparagine glycan is linked to N361. Acidic residues-rich tracts occupy residues 381 to 413 and 428 to 437; these read DEME…EEGM and AEAEPEPELA. The segment at 381–437 is disordered; sequence DEMELEETEPPLEPEDALSDAEFEGEGDYEEGMYADWWQEPDAKGDEAEAEPEPELA.

It belongs to the leprecan family. In terms of assembly, interacts with PLOD1, P3H3 and PPIB. Identified in a complex with PLOD1 and P3H3. In terms of tissue distribution, detected in fibroblasts (at protein level). Detected in spleen, prostate, testis, ovary, colon, pancreas, kidney, placenta and heart.

It localises to the endoplasmic reticulum. In terms of biological role, part of a complex composed of PLOD1, P3H3 and P3H4 that catalyzes hydroxylation of lysine residues in collagen alpha chains and is required for normal assembly and cross-linking of collagen fibrils. Required for normal bone density and normal skin stability via its role in hydroxylation of lysine residues in collagen alpha chains and in collagen fibril assembly. The polypeptide is Endoplasmic reticulum protein SC65 (Homo sapiens (Human)).